Here is a 585-residue protein sequence, read N- to C-terminus: Arginine--tRNA ligase (585 aa).

The short motif at 131–141 (ANPTGPMHVGH) is the 'HIGH' region element.

Belongs to the class-I aminoacyl-tRNA synthetase family. As to quaternary structure, monomer.

The protein resides in the cytoplasm. The catalysed reaction is tRNA(Arg) + L-arginine + ATP = L-arginyl-tRNA(Arg) + AMP + diphosphate. The sequence is that of Arginine--tRNA ligase from Rhizobium etli (strain CIAT 652).